Consider the following 90-residue polypeptide: Cuticle protein 9.5 (90 aa).

Functionally, component of the cuticle of migratory locust which contains more than 100 different structural proteins. This Locusta migratoria (Migratory locust) protein is Cuticle protein 9.5.